A 519-amino-acid chain; its full sequence is MSPLAILISILLSLFCLVVGYYVRKIIAEAKISGARNAAEQILGDAKRDAEALKKEALLEAKDEIHTLRIEAEQEVRERRNELQKQENRLLQKEENLDRKDESLDKREAMLEKKDHSLNERQQHIEEMESKVDEMIRMQQSELERISSLTRDEAKQIILERVENELSHDIAIMMKESENRAKEEADKKAKNILSLALQRCAADHVAETTVSVVNLPNDEMKGRIIGREGRNIRTLETLTGIDLIIDDTPEAVILSGFDPIRRETARIALDKLVQDGRIHPARIEEMVEKSRREVDDYIREMGEQTTFEVGVHGLHPDLIKILGRLKFRTSYGQNVLKHSMEVAFLTGLMASELGEDVTLAKRAGLLHDIGKAIDHEVEGSHVEIGVELATKYKEHPVVINSIASHHGDQEPTSIIAVLVAAADALSAARPGARSETLENYIRRLEKLEEISESYEGVEKSFAIQAGREVRIMVKPDSINDLEAHRLARDIRKRIEDELDYPGHIKVTVIRETRAVEYAK.

Residues 3–23 (PLAILISILLSLFCLVVGYYV) form a helical membrane-spanning segment. The KH domain maps to 209 to 272 (TVSVVNLPND…ETARIALDKL (64 aa)). Residues 335–428 (VLKHSMEVAF…VAAADALSAA (94 aa)) enclose the HD domain.

This sequence belongs to the RNase Y family.

It localises to the cell membrane. Its function is as follows. Endoribonuclease that initiates mRNA decay. This chain is Ribonuclease Y, found in Bacillus licheniformis (strain ATCC 14580 / DSM 13 / JCM 2505 / CCUG 7422 / NBRC 12200 / NCIMB 9375 / NCTC 10341 / NRRL NRS-1264 / Gibson 46).